Reading from the N-terminus, the 87-residue chain is Small ribosomal subunit protein uS15 (87 aa).

The protein belongs to the universal ribosomal protein uS15 family. As to quaternary structure, part of the 30S ribosomal subunit. Forms a bridge to the 50S subunit in the 70S ribosome, contacting the 23S rRNA.

Its function is as follows. One of the primary rRNA binding proteins, it binds directly to 16S rRNA where it helps nucleate assembly of the platform of the 30S subunit by binding and bridging several RNA helices of the 16S rRNA. Functionally, forms an intersubunit bridge (bridge B4) with the 23S rRNA of the 50S subunit in the ribosome. The chain is Small ribosomal subunit protein uS15 from Clostridium perfringens (strain ATCC 13124 / DSM 756 / JCM 1290 / NCIMB 6125 / NCTC 8237 / Type A).